The following is a 636-amino-acid chain: Leucine-rich repeat and fibronectin type-III domain-containing protein 4 (636 aa).

Residues 1 to 16 (MAPPLLLLLLASGAAA) form the signal peptide. The region spanning 17-48 (CPLPCVCQNLSESLSTLCAHRGLLFVPPNVDR) is the LRRNT domain. At 17–518 (CPLPCVCQNL…LQAHVLGGTL (502 aa)) the chain is on the extracellular side. 2 N-linked (GlcNAc...) asparagine glycosylation sites follow: asparagine 25 and asparagine 70. LRR repeat units lie at residues 49–70 (RTVE…DFRN), 73–94 (GLVD…SFGD), 97–118 (SLRS…SLRG), 121–142 (NLQH…AFDD), 146–169 (SLED…GSMP), 170–191 (ALHT…VFAQ), and 194–215 (QLSR…PLFS). An LRRCT domain is found at 234-280 (NPLHCNCELLWLRRLARPDDLETCASPPTLAGRYFWAVPEGEFSCEP). In terms of domain architecture, Ig-like spans 281–367 (PLIARHTQRL…GEATARVELR (87 aa)). Cysteine 302 and cysteine 351 are disulfide-bonded. N-linked (GlcNAc...) asparagine glycosylation is found at asparagine 324, asparagine 333, asparagine 376, and asparagine 440. One can recognise a Fibronectin type-III domain in the interval 405-502 (SEPAVQVTEV…GCAHFSTLPA (98 aa)). The chain crosses the membrane as a helical span at residues 519-539 (TVAVGGVLVAALLVFTVALLV). At 540–636 (RGRGAGNGRL…SAERLEESVV (97 aa)) the chain is on the cytoplasmic side. The disordered stretch occupies residues 556 to 585 (VQSQTNGGTSPMPKSHPPRSPPPRPQRSCS). Positions 569-580 (KSHPPRSPPPRP) are enriched in pro residues. 2 positions are modified to phosphoserine: serine 585 and serine 627. Residues 633 to 636 (ESVV) carry the PDZ-binding motif.

The protein belongs to the LRFN family. In terms of assembly, can form heteromeric complexes with LRFN1, LRFN2, LRFN3 and LRFN5. Unable to form homophilic interactions across cell junctions. Interacts with DLG1, DLG2 and DLG3. Also interacts with DLG4. In terms of processing, glycosylated. In terms of tissue distribution, expressed in brain and testis. In the brain, weak, but broad expression in the cerebral cortex and diencephalic nuclei. Also detected in other parts of the central nervous system, including the olfactory bulb, pons, cerebellum, and medulla oblongata, as well as in the peripheral nervous system, such as the ganglia of cranial nerves and the dorsal root ganglion during gestation.

The protein localises to the membrane. Functionally, promotes neurite outgrowth in hippocampal neurons. May play a role in redistributing DLG4 to the cell periphery. This is Leucine-rich repeat and fibronectin type-III domain-containing protein 4 (Lrfn4) from Mus musculus (Mouse).